A 565-amino-acid polypeptide reads, in one-letter code: Alkaline nuclease (565 aa).

The protein belongs to the herpesviridae alkaline nuclease family. Interacts with major DNA-binding protein; this interaction increases the nuclease processivity of the alkaline exonuclease.

It localises to the host nucleus. Its subcellular location is the host cytoplasm. Functionally, plays a role in processing non linear or branched viral DNA intermediates in order to promote the production of mature packaged unit-length linear progeny viral DNA molecules. Exhibits endonuclease and exonuclease activities and accepts both double-stranded and single-stranded DNA as substrate. Exonuclease digestion of DNA is in the 5'-&gt; 3' direction and the products are 5'-monophosphate nucleosides. Additionally, forms a recombinase with the major DNA-binding protein, which displays strand exchange activity. This Equus caballus (Horse) protein is Alkaline nuclease.